The primary structure comprises 339 residues: Methionine synthase (339 aa).

His212, Cys214, and Cys295 together coordinate Zn(2+).

This sequence belongs to the archaeal MetE family. It depends on Zn(2+) as a cofactor.

The protein operates within amino-acid biosynthesis; L-methionine biosynthesis via de novo pathway. Catalyzes the transfer of a methyl group to L-homocysteine resulting in methionine formation. The physiological methyl donor is unknown. The protein is Methionine synthase of Sulfolobus acidocaldarius (strain ATCC 33909 / DSM 639 / JCM 8929 / NBRC 15157 / NCIMB 11770).